Consider the following 754-residue polypeptide: uncharacterized protein (754 aa).

Catalysis depends on charge relay system residues Ser585 and His707. Residues 733 to 754 form a disordered region; that stretch reads SHAPPPSRKARSAARRSTDPVR.

It belongs to the peptidase S9A family.

This is an uncharacterized protein from Sinorhizobium fredii (strain NBRC 101917 / NGR234).